We begin with the raw amino-acid sequence, 318 residues long: Transcription factor MYBS3 (318 aa).

Disordered regions lie at residues 1 to 20 (MTRR…TCPN) and 50 to 98 (AAGS…PWTE). The CCHC-type zinc-finger motif lies at 3–20 (RRCSHCSHNGHNSRTCPN). Polar residues predominate over residues 8-18 (CSHNGHNSRTC). Residues 50–77 (AAGSTSGGASPADGPDAAPTAADGYASD) show a composition bias toward low complexity. Positions 88–144 (RDRKKGVPWTEEEHRRFLLGLQKLGKGDWRGISRNFVVSRTPTQVASHAQKYFIRQS) constitute an HTH myb-type domain. The H-T-H motif DNA-binding region spans 116 to 140 (WRGISRNFVVSRTPTQVASHAQKYF). Residues 159–200 (VPDESMDLPPLPGGQEPETQVLNQPALPPPREEEEVDSMESD) form a disordered region.

As to expression, expressed in all tissues, with the highest level in senescent leaves.

The protein localises to the nucleus. Functionally, transcription repressor that binds to 5'-TATCCA-3' elements in gene promoters. Contributes to the sugar-repressed transcription of promoters containing SRS or 5'-TATCCA-3' elements. Transcription repressor involved in a cold stress response pathway that confers cold tolerance. Suppresses the DREB1-dependent signaling pathway under prolonged cold stress. DREB1 responds quickly and transiently while MYBS3 responds slowly to cold stress. They may act sequentially and complementarily for adaptation to short- and long-term cold stress. The chain is Transcription factor MYBS3 from Oryza sativa subsp. japonica (Rice).